The chain runs to 644 residues: Subversion of eukaryotic traffic protein A (644 aa).

The glucosyltransferase stretch occupies residues 1 to 400 (MYKIYSYLGW…FHTLLSQVSD (400 aa)). The ptdIns(3)P-binding and localization domain stretch occupies residues 401–644 (PVNPTAHELK…EYDNNHGLRI (244 aa)).

Post-translationally, ubiquitinated and polyubiquitinated when ectopically produced in both yeast and mammalian cells; however it is unsure if this modification occurs during the L.pneumophila infection of host cells.

The protein resides in the secreted. Secreted effector that interferes with vesicular trafficking of host cells. Possesses glucohydrolase and mono-O-glucosyltransferase activity by using UDP-glucose as a sugar donor substrate. Is able to glucosylate histones H4 and H3.1 in vitro, but it is unlikely that histones are the natural substrates for SetA. May glycosylate a component of the host cell vesicle trafficking machinery during L.pneumophila infection. Binds with high specificity to phosphatidylinositol 3-phosphate (PtdIns(3)P), (with a dissociation constant value of 809 nM), which guides SetA to the cytosolic leaflet of the early phagosome of the host cell. The polypeptide is Subversion of eukaryotic traffic protein A (setA) (Legionella pneumophila subsp. pneumophila (strain Philadelphia 1 / ATCC 33152 / DSM 7513)).